A 357-amino-acid polypeptide reads, in one-letter code: S-adenosyl-L-methionine:benzoic acid/salicylic acid carboxyl methyltransferase 2 (357 aa).

Y18 contacts S-adenosyl-L-homocysteine. Q25 contacts benzoate. Residues C59, N64, D96, L97, S135, and F136 each contribute to the S-adenosyl-L-homocysteine site. W157 contacts benzoate. Positions 168, 254, 256, and 257 each coordinate Mg(2+). Q260 provides a ligand contact to benzoate.

The protein belongs to the methyltransferase superfamily. Type-7 methyltransferase family. In terms of tissue distribution, predominantly expressed in petal limbs and tubes of corollas.

It catalyses the reaction benzoate + S-adenosyl-L-methionine = methyl benzoate + S-adenosyl-L-homocysteine. The catalysed reaction is salicylate + S-adenosyl-L-methionine = methyl salicylate + S-adenosyl-L-homocysteine. It participates in aromatic compound metabolism. In terms of biological role, converts benzoic acid into the volatile ester methyl benzoates. This scent, mostly produced in a rhythmical, diurnal manner, attracts the pollinators. This Petunia hybrida (Petunia) protein is S-adenosyl-L-methionine:benzoic acid/salicylic acid carboxyl methyltransferase 2.